We begin with the raw amino-acid sequence, 101 residues long: Small ribosomal subunit protein uS14 (101 aa).

This sequence belongs to the universal ribosomal protein uS14 family. As to quaternary structure, part of the 30S ribosomal subunit. Contacts proteins S3 and S10.

Binds 16S rRNA, required for the assembly of 30S particles and may also be responsible for determining the conformation of the 16S rRNA at the A site. The protein is Small ribosomal subunit protein uS14 of Actinobacillus succinogenes (strain ATCC 55618 / DSM 22257 / CCUG 43843 / 130Z).